Reading from the N-terminus, the 124-residue chain is Small ribosomal subunit protein uS12 (124 aa).

A disordered region spans residues 1–25 (MPTINQLIRKPRKSQKEKTASPALQ). Asp89 carries the post-translational modification 3-methylthioaspartic acid.

Belongs to the universal ribosomal protein uS12 family. As to quaternary structure, part of the 30S ribosomal subunit. Contacts proteins S8 and S17. May interact with IF1 in the 30S initiation complex.

In terms of biological role, with S4 and S5 plays an important role in translational accuracy. Interacts with and stabilizes bases of the 16S rRNA that are involved in tRNA selection in the A site and with the mRNA backbone. Located at the interface of the 30S and 50S subunits, it traverses the body of the 30S subunit contacting proteins on the other side and probably holding the rRNA structure together. The combined cluster of proteins S8, S12 and S17 appears to hold together the shoulder and platform of the 30S subunit. The polypeptide is Small ribosomal subunit protein uS12 (Borrelia duttonii (strain Ly)).